The following is a 463-amino-acid chain: General transcription factor IIH subunit 4 (463 aa).

This sequence belongs to the TFB2 family. As to quaternary structure, component of the 7-subunit TFIIH core complex composed of XPB/ERCC3, XPD/ERCC2, GTF2H1, GTF2H2, GTF2H3, GTF2H4 and GTF2H5, which is active in NER. The core complex associates with the 3-subunit CDK-activating kinase (CAK) module composed of CCNH/cyclin H, CDK7 and MNAT1 to form the 10-subunit holoenzyme (holo-TFIIH) active in transcription. Part of TBP-based Pol II pre-initiation complex (PIC), in which Pol II core assembles with general transcription factors and other specific initiation factors including GTF2E1, GTF2E2, GTF2F1, GTF2F2, TCEA1, ERCC2, ERCC3, GTF2H2, GTF2H3, GTF2H4, GTF2H5, GTF2A1, GTF2A2, GTF2B and TBP; this large multi-subunit PIC complex mediates DNA unwinding and targets Pol II core to the transcription start site where the first phosphodiester bond forms.

The protein resides in the nucleus. Component of the general transcription and DNA repair factor IIH (TFIIH) core complex, which is involved in general and transcription-coupled nucleotide excision repair (NER) of damaged DNA and, when complexed to CAK, in RNA transcription by RNA polymerase II. In NER, TFIIH acts by opening DNA around the lesion to allow the excision of the damaged oligonucleotide and its replacement by a new DNA fragment. In transcription, TFIIH has an essential role in transcription initiation. When the pre-initiation complex (PIC) has been established, TFIIH is required for promoter opening and promoter escape. Phosphorylation of the C-terminal tail (CTD) of the largest subunit of RNA polymerase II by the kinase module CAK controls the initiation of transcription. This chain is General transcription factor IIH subunit 4 (Gtf2h4), found in Mus musculus (Mouse).